The chain runs to 148 residues: Receptor activity-modifying protein 1 (148 aa).

The signal sequence occupies residues 1–26 (MVRVLRGLPWRGLWLLLAHQLFLVTA). 3 disulfides stabilise this stretch: C27–C82, C40–C72, and C57–C104. Topologically, residues 27–118 (CQDAHYGTLM…RALGDPPSTI (92 aa)) are extracellular. The helical transmembrane segment at 119 to 140 (LCPFVVLPITVTLLVTALVVWR) threads the bilayer. Residues 141–148 (SKRAESIV) lie on the Cytoplasmic side of the membrane.

It belongs to the RAMP family. Heterodimer of CALCRL and RAMP1; the interaction induces allosteric modulation of CALCRL function and CGRP1/CALCA and CGRP2/CALCB ligand specificity. Heterodimer of CALCR and RAMP1; interaction forms the AMYR1 receptor complex for amylin/IAPP and CGRP1/CALCA ligands.

The protein localises to the cell membrane. Its function is as follows. Accessory protein that interacts with and modulates the function of G-protein coupled receptors including calcitonin gene-related peptide type 1 receptor (CALCRL) and calcitonin receptor (CALCR). Required for the transport of CALCRL to the plasma membrane. Together with CALCRL, form the receptor complex for the calcitonin gene-related peptides CGRP1/CALCA and CGRP2/CALCB. Together with CALCR, form the AMYR1 receptor complex for amylin/IAPP and CGRP1/CALCA. The protein is Receptor activity-modifying protein 1 (RAMP1) of Cavia porcellus (Guinea pig).